Reading from the N-terminus, the 691-residue chain is Elongation factor G (691 aa).

Positions 8–283 (EDYRNFGIMA…AVVDYLPTPI (276 aa)) constitute a tr-type G domain. GTP-binding positions include 17-24 (AHIDAGKT), 81-85 (DTPGH), and 135-138 (NKMD).

The protein belongs to the TRAFAC class translation factor GTPase superfamily. Classic translation factor GTPase family. EF-G/EF-2 subfamily.

The protein resides in the cytoplasm. Catalyzes the GTP-dependent ribosomal translocation step during translation elongation. During this step, the ribosome changes from the pre-translocational (PRE) to the post-translocational (POST) state as the newly formed A-site-bound peptidyl-tRNA and P-site-bound deacylated tRNA move to the P and E sites, respectively. Catalyzes the coordinated movement of the two tRNA molecules, the mRNA and conformational changes in the ribosome. The sequence is that of Elongation factor G from Beijerinckia indica subsp. indica (strain ATCC 9039 / DSM 1715 / NCIMB 8712).